The primary structure comprises 308 residues: UDP-N-acetylenolpyruvoylglucosamine reductase (308 aa).

In terms of domain architecture, FAD-binding PCMH-type spans threonine 33–glycine 197. Arginine 176 is a catalytic residue. Serine 226 serves as the catalytic Proton donor. Glutamate 296 is an active-site residue.

It belongs to the MurB family. The cofactor is FAD.

The protein resides in the cytoplasm. The enzyme catalyses UDP-N-acetyl-alpha-D-muramate + NADP(+) = UDP-N-acetyl-3-O-(1-carboxyvinyl)-alpha-D-glucosamine + NADPH + H(+). It participates in cell wall biogenesis; peptidoglycan biosynthesis. In terms of biological role, cell wall formation. This is UDP-N-acetylenolpyruvoylglucosamine reductase from Staphylococcus carnosus (strain TM300).